The chain runs to 416 residues: UDP-N-acetylglucosamine 1-carboxyvinyltransferase (416 aa).

22–23 is a phosphoenolpyruvate binding site; the sequence is KN. Arg92 lines the UDP-N-acetyl-alpha-D-glucosamine pocket. Cys116 acts as the Proton donor in catalysis. Cys116 is modified (2-(S-cysteinyl)pyruvic acid O-phosphothioketal). UDP-N-acetyl-alpha-D-glucosamine contacts are provided by residues 121–125, Asp304, and Ile326; that span reads RPIDQ.

This sequence belongs to the EPSP synthase family. MurA subfamily.

The protein resides in the cytoplasm. It carries out the reaction phosphoenolpyruvate + UDP-N-acetyl-alpha-D-glucosamine = UDP-N-acetyl-3-O-(1-carboxyvinyl)-alpha-D-glucosamine + phosphate. Its pathway is cell wall biogenesis; peptidoglycan biosynthesis. Functionally, cell wall formation. Adds enolpyruvyl to UDP-N-acetylglucosamine. In Desulfatibacillum aliphaticivorans, this protein is UDP-N-acetylglucosamine 1-carboxyvinyltransferase.